A 137-amino-acid chain; its full sequence is CCQPLVYRNKMTPLRVAVLLAGCWAIPVLISFLPIMQGWNNIGITDLIEKRKFHQNSNSTYCIFMVNKPYAITCSVVAFYIPFLLMVLAYWRIYVTAKEHAHQIQMLQRAGAPAEGRPPSADQHSTHRMRTETKAAK.

The helical transmembrane segment at 12–35 threads the bilayer; sequence TPLRVAVLLAGCWAIPVLISFLPI. Asn58 is a glycosylation site (N-linked (GlcNAc...) asparagine). Residues 67–90 form a helical membrane-spanning segment; it reads NKPYAITCSVVAFYIPFLLMVLAY. The disordered stretch occupies residues 112–137; it reads APAEGRPPSADQHSTHRMRTETKAAK.

The protein belongs to the G-protein coupled receptor 1 family. As to quaternary structure, interacts (via C-terminus 330-346 AA) with GRK5; this interaction is promoted by 5-HT (serotonin).

The protein resides in the cell membrane. It is found in the endosome membrane. Its function is as follows. G-protein coupled receptor for 5-hydroxytryptamine (serotonin), a biogenic hormone that functions as a neurotransmitter, a hormone and a mitogen. Ligand binding causes a conformation change that triggers signaling via guanine nucleotide-binding proteins (G proteins) and modulates the activity of downstream effectors. HTR4 is coupled to G(s) G alpha proteins and mediates activation of adenylate cyclase activity. In Sus scrofa (Pig), this protein is 5-hydroxytryptamine receptor 4 (HTR4).